We begin with the raw amino-acid sequence, 937 residues long: Bifunctional glutamine synthetase adenylyltransferase/adenylyl-removing enzyme (937 aa).

Positions 1-436 (MSQPIPSASP…AAEFAELLAP (436 aa)) are adenylyl removase. The tract at residues 443-937 (PDTLADYWRA…QLRFQPGKGA (495 aa)) is adenylyl transferase.

The protein belongs to the GlnE family. The cofactor is Mg(2+).

It catalyses the reaction [glutamine synthetase]-O(4)-(5'-adenylyl)-L-tyrosine + phosphate = [glutamine synthetase]-L-tyrosine + ADP. The enzyme catalyses [glutamine synthetase]-L-tyrosine + ATP = [glutamine synthetase]-O(4)-(5'-adenylyl)-L-tyrosine + diphosphate. Involved in the regulation of glutamine synthetase GlnA, a key enzyme in the process to assimilate ammonia. When cellular nitrogen levels are high, the C-terminal adenylyl transferase (AT) inactivates GlnA by covalent transfer of an adenylyl group from ATP to specific tyrosine residue of GlnA, thus reducing its activity. Conversely, when nitrogen levels are low, the N-terminal adenylyl removase (AR) activates GlnA by removing the adenylyl group by phosphorolysis, increasing its activity. The regulatory region of GlnE binds the signal transduction protein PII (GlnB) which indicates the nitrogen status of the cell. This chain is Bifunctional glutamine synthetase adenylyltransferase/adenylyl-removing enzyme, found in Xanthomonas campestris pv. campestris (strain B100).